The sequence spans 89 residues: Large ribosomal subunit protein bL27 (89 aa).

Residues 1 to 21 (MAHKKAGGSSRNGRDSAGRRL) form a disordered region.

The protein belongs to the bacterial ribosomal protein bL27 family.

The chain is Large ribosomal subunit protein bL27 from Roseobacter denitrificans (strain ATCC 33942 / OCh 114) (Erythrobacter sp. (strain OCh 114)).